We begin with the raw amino-acid sequence, 598 residues long: Elongation factor 4 (598 aa).

One can recognise a tr-type G domain in the interval 3–185 (QHIRNFSIIA…MIVAQIPPPE (183 aa)). Residues 15–20 (DHGKST) and 132–135 (NKID) each bind GTP.

Belongs to the TRAFAC class translation factor GTPase superfamily. Classic translation factor GTPase family. LepA subfamily.

The protein localises to the cell inner membrane. It carries out the reaction GTP + H2O = GDP + phosphate + H(+). Functionally, required for accurate and efficient protein synthesis under certain stress conditions. May act as a fidelity factor of the translation reaction, by catalyzing a one-codon backward translocation of tRNAs on improperly translocated ribosomes. Back-translocation proceeds from a post-translocation (POST) complex to a pre-translocation (PRE) complex, thus giving elongation factor G a second chance to translocate the tRNAs correctly. Binds to ribosomes in a GTP-dependent manner. In Nitrosomonas europaea (strain ATCC 19718 / CIP 103999 / KCTC 2705 / NBRC 14298), this protein is Elongation factor 4.